The sequence spans 443 residues: Deoxyguanosinetriphosphate triphosphohydrolase-like protein (443 aa).

Residues 61–246 (RLTHSLEVAC…MEAADDICYG (186 aa)) form the HD domain.

It belongs to the dGTPase family. Type 3 subfamily.

This is Deoxyguanosinetriphosphate triphosphohydrolase-like protein from Pseudomonas aeruginosa (strain LESB58).